Here is a 513-residue protein sequence, read N- to C-terminus: NAD(P)H-quinone oxidoreductase subunit 2, chloroplastic (513 aa).

14 helical membrane-spanning segments follow: residues 11–31 (NLIT…ILMI), 38–58 (SVWL…ILLF), 78–98 (GFTI…IPLS), 112–132 (FLIL…ANDL), 133–153 (VTIF…AGQA), 167–187 (LLMG…LYGL), 219–239 (FGAL…GFKI), 256–276 (PTPV…ALAT), 290–310 (WHIV…LIAA), 318–338 (MLAY…LVGN), 348–368 (YLLI…IFGL), 389–409 (AFAL…AGFF), 422–442 (HLYL…YYYL), and 478–498 (LGLT…NPLI).

Belongs to the complex I subunit 2 family. NDH is composed of at least 16 different subunits, 5 of which are encoded in the nucleus.

Its subcellular location is the plastid. It is found in the chloroplast thylakoid membrane. It catalyses the reaction a plastoquinone + NADH + (n+1) H(+)(in) = a plastoquinol + NAD(+) + n H(+)(out). The catalysed reaction is a plastoquinone + NADPH + (n+1) H(+)(in) = a plastoquinol + NADP(+) + n H(+)(out). Its function is as follows. NDH shuttles electrons from NAD(P)H:plastoquinone, via FMN and iron-sulfur (Fe-S) centers, to quinones in the photosynthetic chain and possibly in a chloroplast respiratory chain. The immediate electron acceptor for the enzyme in this species is believed to be plastoquinone. Couples the redox reaction to proton translocation, and thus conserves the redox energy in a proton gradient. In Staurastrum punctulatum (Green alga), this protein is NAD(P)H-quinone oxidoreductase subunit 2, chloroplastic.